The following is a 699-amino-acid chain: Elongation factor G (699 aa).

In terms of domain architecture, tr-type G spans 8–288 (EDYRNFGIMA…AVVDYLPSPI (281 aa)). Residues 17–24 (AHIDAGKT), 86–90 (DTPGH), and 140–143 (NKMD) each bind GTP.

The protein belongs to the TRAFAC class translation factor GTPase superfamily. Classic translation factor GTPase family. EF-G/EF-2 subfamily.

Its subcellular location is the cytoplasm. Catalyzes the GTP-dependent ribosomal translocation step during translation elongation. During this step, the ribosome changes from the pre-translocational (PRE) to the post-translocational (POST) state as the newly formed A-site-bound peptidyl-tRNA and P-site-bound deacylated tRNA move to the P and E sites, respectively. Catalyzes the coordinated movement of the two tRNA molecules, the mRNA and conformational changes in the ribosome. The chain is Elongation factor G from Sinorhizobium fredii (strain NBRC 101917 / NGR234).